The chain runs to 249 residues: tRNA 2'-phosphotransferase 1 (249 aa).

Met-1 is subject to N-acetylmethionine. Disordered stretches follow at residues 1–25 and 220–249; these read MNAPGGRRKEGRRTHRPREQDRNVQ and KPLSLAGDKETETQSGPKLSSRGGRRKIQQ.

The protein belongs to the KptA/TPT1 family.

It carries out the reaction 2'-phospho-[ligated tRNA] + NAD(+) = mature tRNA + ADP-alpha-D-ribose 1'',2''-cyclic phosphate + nicotinamide. Functionally, catalyzes the last step of tRNA splicing, the transfer of the splice junction 2'-phosphate from ligated tRNA to NAD to produce ADP-ribose 1''-2'' cyclic phosphate. The protein is tRNA 2'-phosphotransferase 1 (Trpt1) of Mus musculus (Mouse).